Here is a 407-residue protein sequence, read N- to C-terminus: S-adenosylmethionine synthase (407 aa).

His15 contacts ATP. Asp17 contacts Mg(2+). Glu43 contributes to the K(+) binding site. L-methionine contacts are provided by Glu56 and Gln99. Residues 99–109 (QSPDIARGVDT) are flexible loop. The interval 112–131 (ERRGGGTAPGGPGDELDRQG) is disordered. ATP is bound by residues 179 to 181 (DGK), 252 to 253 (RF), Asp261, 267 to 268 (RK), Ala284, and Lys288. Residue Asp261 participates in L-methionine binding. L-methionine is bound at residue Lys292.

Belongs to the AdoMet synthase family. In terms of assembly, homotetramer; dimer of dimers. Mg(2+) is required as a cofactor. Requires K(+) as cofactor.

It localises to the cytoplasm. It catalyses the reaction L-methionine + ATP + H2O = S-adenosyl-L-methionine + phosphate + diphosphate. The protein operates within amino-acid biosynthesis; S-adenosyl-L-methionine biosynthesis; S-adenosyl-L-methionine from L-methionine: step 1/1. Its function is as follows. Catalyzes the formation of S-adenosylmethionine (AdoMet) from methionine and ATP. The overall synthetic reaction is composed of two sequential steps, AdoMet formation and the subsequent tripolyphosphate hydrolysis which occurs prior to release of AdoMet from the enzyme. This is S-adenosylmethionine synthase from Streptomyces fradiae (Streptomyces roseoflavus).